A 196-amino-acid polypeptide reads, in one-letter code: 3-isopropylmalate dehydratase small subunit (196 aa).

It belongs to the LeuD family. LeuD type 1 subfamily. Heterodimer of LeuC and LeuD.

It carries out the reaction (2R,3S)-3-isopropylmalate = (2S)-2-isopropylmalate. It functions in the pathway amino-acid biosynthesis; L-leucine biosynthesis; L-leucine from 3-methyl-2-oxobutanoate: step 2/4. In terms of biological role, catalyzes the isomerization between 2-isopropylmalate and 3-isopropylmalate, via the formation of 2-isopropylmaleate. The chain is 3-isopropylmalate dehydratase small subunit from Corynebacterium diphtheriae (strain ATCC 700971 / NCTC 13129 / Biotype gravis).